The chain runs to 528 residues: UDP-glucuronosyltransferase 2B10 (528 aa).

An N-terminal signal peptide occupies residues 1 to 23 (MALKWTTVLLIQLSFYFSSGSCG). N-linked (GlcNAc...) asparagine glycosylation is present at asparagine 66. Lysine 134 is subject to N6-succinyllysine. 2 N-linked (GlcNAc...) asparagine glycosylation sites follow: asparagine 314 and asparagine 481. Residues 492-512 (VIGFLLACVATVLFIITKCCL) traverse the membrane as a helical segment.

The protein belongs to the UDP-glycosyltransferase family.

The protein localises to the microsome membrane. Its subcellular location is the endoplasmic reticulum membrane. It catalyses the reaction glucuronate acceptor + UDP-alpha-D-glucuronate = acceptor beta-D-glucuronoside + UDP + H(+). UDPGT is of major importance in the conjugation and subsequent elimination of potentially toxic xenobiotics and endogenous compounds. This is UDP-glucuronosyltransferase 2B10 (UGT2B10) from Homo sapiens (Human).